We begin with the raw amino-acid sequence, 141 residues long: Nucleoside diphosphate kinase (141 aa).

Positions 9, 57, 85, 91, 102, and 112 each coordinate ATP. H115 functions as the Pros-phosphohistidine intermediate in the catalytic mechanism.

The protein belongs to the NDK family. Homotetramer. It depends on Mg(2+) as a cofactor.

The protein localises to the cytoplasm. It carries out the reaction a 2'-deoxyribonucleoside 5'-diphosphate + ATP = a 2'-deoxyribonucleoside 5'-triphosphate + ADP. The enzyme catalyses a ribonucleoside 5'-diphosphate + ATP = a ribonucleoside 5'-triphosphate + ADP. Functionally, major role in the synthesis of nucleoside triphosphates other than ATP. The ATP gamma phosphate is transferred to the NDP beta phosphate via a ping-pong mechanism, using a phosphorylated active-site intermediate. This chain is Nucleoside diphosphate kinase, found in Chlamydia felis (strain Fe/C-56) (Chlamydophila felis).